A 484-amino-acid polypeptide reads, in one-letter code: 1,3-beta-glucanosyltransferase GAS5 (484 aa).

A signal peptide spans 1-19; it reads MLLRSLTSAFVLSAGLAQA. N-linked (GlcNAc...) asparagine glycosylation is found at asparagine 24 and asparagine 60. Cysteines 71 and 100 form a disulfide. (1,3-beta-D-glucosyl)n contacts are provided by tyrosine 89, asparagine 159, and glutamate 160. Glutamate 160 (proton donor) is an active-site residue. Residue asparagine 166 is glycosylated (N-linked (GlcNAc...) asparagine). (1,3-beta-D-glucosyl)n-binding residues include aspartate 201 and arginine 206. Intrachain disulfides connect cysteine 215/cysteine 348 and cysteine 234/cysteine 265. Glutamate 262 serves as the catalytic Nucleophile. Tyrosine 295 contacts (1,3-beta-D-glucosyl)n. Asparagine 299, asparagine 344, and asparagine 359 each carry an N-linked (GlcNAc...) asparagine glycan. The disordered stretch occupies residues 383-462; it reads TGIATQQSCD…SSQSSSKSKG (80 aa). A compositionally biased stretch (acidic residues) spans 394–404; it reads KDDDDEEDDDT. Positions 405-462 are enriched in low complexity; the sequence is SSSSSSSSSSSSSASSSSESSSSTSKASSSSPSASETSLLKSAASATSSSQSSSKSKG. Glycine 462 carries GPI-anchor amidated glycine lipidation. Residues 463 to 484 constitute a propeptide, removed in mature form; that stretch reads AAGIIEIPLIFRALAELYNLVL.

The protein belongs to the glycosyl hydrolase 72 family. In terms of processing, the GPI-anchor is attached to the protein in the endoplasmic reticulum and serves to target the protein to the cell surface. There, the glucosamine-inositol phospholipid moiety is cleaved off and the GPI-modified mannoprotein is covalently attached via its lipidless GPI glycan remnant to the 1,6-beta-glucan of the outer cell wall layer.

It is found in the secreted. The protein localises to the cell wall. The protein resides in the membrane. Functionally, splits internally a 1,3-beta-glucan molecule and transfers the newly generated reducing end (the donor) to the non-reducing end of another 1,3-beta-glucan molecule (the acceptor) forming a 1,3-beta linkage, resulting in the elongation of 1,3-beta-glucan chains in the cell wall. Involved in cell wall biosynthesis and morphogenesis. This chain is 1,3-beta-glucanosyltransferase GAS5 (GAS5), found in Saccharomyces cerevisiae (strain ATCC 204508 / S288c) (Baker's yeast).